A 309-amino-acid polypeptide reads, in one-letter code: Foldase protein PrsA (309 aa).

Positions 1-22 (MKTRSKLAAGFLTLMSVATLAA) are cleaved as a signal peptide. Cysteine 23 carries the N-palmitoyl cysteine lipid modification. Cysteine 23 carries the S-diacylglycerol cysteine lipid modification. The region spanning 146-241 (TPETSVQVIK…TSYYIIKVTD (96 aa)) is the PpiC domain.

It belongs to the PrsA family.

Its subcellular location is the cell membrane. It carries out the reaction [protein]-peptidylproline (omega=180) = [protein]-peptidylproline (omega=0). Plays a major role in protein secretion by helping the post-translocational extracellular folding of several secreted proteins. The chain is Foldase protein PrsA from Streptococcus agalactiae serotype V (strain ATCC BAA-611 / 2603 V/R).